A 176-amino-acid polypeptide reads, in one-letter code: Macro domain-containing protein LMOf2365_2748 (176 aa).

Residues 1-175 (MEITVVKGDI…LYNKLINSEV (175 aa)) enclose the Macro domain.

It belongs to the MacroD-type family.

The protein is Macro domain-containing protein LMOf2365_2748 of Listeria monocytogenes serotype 4b (strain F2365).